The sequence spans 125 residues: Small ribosomal subunit protein uS12 (125 aa).

A disordered region spans residues 9–31; that stretch reads RQGREVEKIKSKSPAMENSPQRR. A 3-methylthioaspartic acid modification is found at D89. The segment at 105 to 125 is disordered; sequence QGVKDRKQSRSKYGAKRPKAK. The segment covering 113–125 has biased composition (basic residues); that stretch reads SRSKYGAKRPKAK.

It belongs to the universal ribosomal protein uS12 family. As to quaternary structure, part of the 30S ribosomal subunit. Contacts proteins S8 and S17. May interact with IF1 in the 30S initiation complex.

With S4 and S5 plays an important role in translational accuracy. Functionally, interacts with and stabilizes bases of the 16S rRNA that are involved in tRNA selection in the A site and with the mRNA backbone. Located at the interface of the 30S and 50S subunits, it traverses the body of the 30S subunit contacting proteins on the other side and probably holding the rRNA structure together. The combined cluster of proteins S8, S12 and S17 appears to hold together the shoulder and platform of the 30S subunit. The protein is Small ribosomal subunit protein uS12 of Polaromonas naphthalenivorans (strain CJ2).